Consider the following 142-residue polypeptide: MEIWTVLEDFHKTRQLLENASNGVSHLWRFCFGGDLAKLVYRAKQDYREQFEDILRECPSLFDALNLGHQSHFNQRISRALDFTTPGRTTAAVAFFAFIFDKWSQETHFSRDYQLDFLAVALWRTWKCQRLNAIPATCRYSR.

The protein belongs to the adenoviridae E1B 19 kDa protein family.

The protein localises to the host cell membrane. The protein resides in the host nucleus envelope. It is found in the host nucleus lamina. In terms of biological role, putative adenovirus Bcl-2 homolog that inhibits apoptosis induced by TNF or FAS pathways, as well as p53-mediated apoptosis. Without E1B 19K function, virus production is compromised because of premature death of host cell. Interacts with Bax protein in cell lysates. The protein is E1B protein, small T-antigen of Homo sapiens (Human).